The chain runs to 355 residues: Heat-inducible transcription repressor HrcA (355 aa).

This sequence belongs to the HrcA family.

Negative regulator of class I heat shock genes (grpE-dnaK-dnaJ and groELS operons). Prevents heat-shock induction of these operons. The sequence is that of Heat-inducible transcription repressor HrcA from Nitratidesulfovibrio vulgaris (strain ATCC 29579 / DSM 644 / CCUG 34227 / NCIMB 8303 / VKM B-1760 / Hildenborough) (Desulfovibrio vulgaris).